The sequence spans 339 residues: Protein FAM50A (339 aa).

The tract at residues 1–31 is disordered; the sequence is MAQYKGAASEAGRAMHLMKKREKQREQMEQM. Residue Ala-2 is modified to N-acetylalanine. Lys-100 is covalently cross-linked (Glycyl lysine isopeptide (Lys-Gly) (interchain with G-Cter in SUMO2)). Residues 121–177 are disordered; sequence SFTLEEEEEGGEEEEEAAMYEEEMEREEITTKKRKLGKNPDVDTSFLPDRDREEEEN. Acidic residues predominate over residues 124-146; sequence LEEEEEGGEEEEEAAMYEEEMER. Residues 152–155 carry the Nuclear localization signal motif; the sequence is KKRK. The span at 168–177 shows a compositional bias: basic and acidic residues; that stretch reads PDRDREEEEN.

It belongs to the FAM50 family. As to quaternary structure, interacts with EFTUD2, a component of the spliceosome U5 complex. Interacts with DDX41, a component of the spliceosome C complex. Widely expressed in fetal and adult tissues. Mostly abundant in fetal brain, liver and kidney; in the adult, high levels were also observed in heart, skeletal muscle, spleen, thymus, prostate and small intestine. Expressed in fetal cerebellum and hypothalamus. Low expression is observed in fetal temporal lobe.

The protein localises to the nucleus. Its function is as follows. Probably involved in the regulation of pre-mRNA splicing. This chain is Protein FAM50A (FAM50A), found in Homo sapiens (Human).